The sequence spans 106 residues: Large ribosomal subunit protein bL21 (106 aa).

This sequence belongs to the bacterial ribosomal protein bL21 family. In terms of assembly, part of the 50S ribosomal subunit. Contacts protein L20.

Its function is as follows. This protein binds to 23S rRNA in the presence of protein L20. In Xanthomonas oryzae pv. oryzae (strain MAFF 311018), this protein is Large ribosomal subunit protein bL21.